A 1463-amino-acid chain; its full sequence is Secretory phospholipase A2 receptor (1463 aa).

Residues 1–20 (MPLLSLSLLLLLLQVPAGSA) form the signal peptide. Residues 21-1392 (ETAAWAVTPE…IHTVKKHPGK (1372 aa)) lie on the Extracellular side of the membrane. The region spanning 38–115 (KGIFIIQSEN…CDSTHVSLKW (78 aa)) is the Ricin B-type lectin domain. Asn-93 carries an N-linked (GlcNAc...) asparagine glycan. A Fibronectin type-II domain is found at 173–221 (AHGTPCMFPFQYNQQWHHECTREGREDNLLWCATTSRYERDEKWGFCPD). 16 disulfides stabilise this stretch: Cys-178/Cys-204, Cys-192/Cys-219, Cys-260/Cys-354, Cys-330/Cys-346, Cys-406/Cys-501, Cys-478/Cys-493, Cys-617/Cys-634, Cys-699/Cys-796, Cys-774/Cys-788, Cys-840/Cys-938, Cys-915/Cys-930, Cys-992/Cys-1096, Cys-1068/Cys-1088, Cys-1209/Cys-1223, Cys-1280/Cys-1377, and Cys-1354/Cys-1369. 8 C-type lectin domains span residues 229–353 (CDAV…LPYV), 357–500 (YLNP…LFYL), 504–641 (TGLV…KAMS), 646–795 (PVEN…REWI), 799–937 (PRDV…MPSI), 941–1095 (KKVW…YGFV), 1099–1230 (MQDA…LQGA), and 1235–1376 (PTET…KGFI). The N-linked (GlcNAc...) asparagine glycan is linked to Asn-454. An N-linked (GlcNAc...) asparagine glycan is attached at Asn-1057. Residues 1393 to 1421 (GPSHSVIPLTVALTLLVILAISTLSFCMY) traverse the membrane as a helical segment. Residues 1422–1463 (KHSHIIFGRLAQFRNPYYPSANFSTVHLEENILISDLEKNDQ) are Cytoplasmic-facing. The Endocytosis signal motif lies at 1436-1442 (NPYYPSA).

In terms of assembly, interacts with sPLA2-IB/PLA2G1B; this interaction mediates intracellular signaling as well as clearance of extracellular sPLA2-IB/PLA2G1B via endocytotic pathway. Interacts with sPLA2-X/PLA2G10; this interaction mediates sPLA2-X/PLA2G10 clearance and inactivation. The secretory phospholipase A2 receptor form may be produced by the action of metalloproteinases. It contains all extracellular domains and only lacks transmembrane and cytosolic regions. It is however unclear whether this form is produced by proteolytic cleavage as suggested by some experiments, or by alternative splicing.

It is found in the cell membrane. The protein resides in the secreted. Functionally, receptor for secretory phospholipase A2 (sPLA2). Also able to bind to snake PA2-like toxins. Although its precise function remains unclear, binding of sPLA2 to its receptor participates in both positive and negative regulation of sPLA2 functions as well as clearance of sPLA2. Binding of sPLA2-IB/PLA2G1B induces various effects depending on the cell type, such as activation of the mitogen-activated protein kinase (MAPK) cascade to induce cell proliferation, the production of lipid mediators, selective release of arachidonic acid in bone marrow-derived mast cells. In neutrophils, binding of sPLA2-IB/PLA2G1B can activate p38 MAPK to stimulate elastase release and cell adhesion. May be involved in responses in pro-inflammatory cytokine productions during endotoxic shock. Also has endocytic properties and rapidly internalizes sPLA2 ligands, which is particularly important for the clearance of extracellular sPLA2s to protect their potent enzymatic activities. The soluble secretory phospholipase A2 receptor form is circulating and acts as a negative regulator of sPLA2 functions by blocking the biological functions of sPLA2-IB/PLA2G1B and sPLA2-X/PLA2G10. This is Secretory phospholipase A2 receptor (PLA2R1) from Bos taurus (Bovine).